Consider the following 494-residue polypeptide: Glycosyl hydrolase family 109 protein (494 aa).

Disordered stretches follow at residues 1–35 (MNDA…LRTT) and 59–86 (EAAQ…MAGV). A signal peptide (tat-type signal) is located at residues 1–55 (MNDAAPQNPGQDEAKGTGEKDNGGSMSPRSALRTTAGVAGAGLGLSALGTGTASA). Residues 12 to 22 (DEAKGTGEKDN) show a composition bias toward basic and acidic residues. Residues 103 to 104 (NR), Asp125, 174 to 177 (WDFH), 194 to 195 (EC), and Asn223 each bind NAD(+). Substrate-binding positions include Tyr252, Arg271, 283–286 (YPNH), and Tyr365. Tyr283 contributes to the NAD(+) binding site. Positions 463–494 (KANGKPQQIPDFTRGEWKKSRPGTDSEKPSEP) are disordered. Residues 475–494 (TRGEWKKSRPGTDSEKPSEP) show a composition bias toward basic and acidic residues.

Belongs to the Gfo/Idh/MocA family. Glycosyl hydrolase 109 subfamily. NAD(+) serves as cofactor. Post-translationally, predicted to be exported by the Tat system. The position of the signal peptide cleavage has not been experimentally proven.

In terms of biological role, glycosidase. In Streptomyces niveus (Streptomyces spheroides), this protein is Glycosyl hydrolase family 109 protein.